A 488-amino-acid chain; its full sequence is Histone deacetylase 2 (488 aa).

The interval 9–322 is histone deacetylase; sequence KKKVCYYYDG…WTYETAVALD (314 aa). The 1D-myo-inositol 1,4,5,6-tetrakisphosphate site is built by G28 and K32. H142 is a catalytic residue. Residues D177, H179, and D265 each contribute to the Zn(2+) site. R271 lines the 1D-myo-inositol 1,4,5,6-tetrakisphosphate pocket. A disordered region spans residues 389–488; the sequence is AVHEDSGDED…GAKSEQLSNP (100 aa). Residues 402 to 417 show a composition bias toward basic and acidic residues; sequence PDKRISIRASDKRIAC. Acidic residues predominate over residues 418-428; it reads DEEFSDSEDEG. The segment covering 429–481 has biased composition (basic and acidic residues); the sequence is EGGRRNVADHKKGAKKARIEEDKKETEDKKADVKEEDKSKDNSGEKTDTKGAK.

The protein belongs to the histone deacetylase family. HD type 1 subfamily. It depends on Zn(2+) as a cofactor.

The protein resides in the nucleus. The protein localises to the cytoplasm. The enzyme catalyses N(6)-acetyl-L-lysyl-[histone] + H2O = L-lysyl-[histone] + acetate. It catalyses the reaction N(6)-acetyl-L-lysyl-[protein] + H2O = L-lysyl-[protein] + acetate. The catalysed reaction is N(6)-(2E)-butenoyl-L-lysyl-[protein] + H2O = (2E)-2-butenoate + L-lysyl-[protein]. It carries out the reaction N(6)-(2-hydroxyisobutanoyl)-L-lysyl-[protein] + H2O = 2-hydroxy-2-methylpropanoate + L-lysyl-[protein]. The enzyme catalyses N(6)-[(S)-lactoyl]-L-lysyl-[protein] + H2O = (S)-lactate + L-lysyl-[protein]. Inositol tetraphosphate (1D-myo-inositol 1,4,5,6-tetrakisphosphate) may act as an intermolecular glue between HDAC2 and N-Cor repressor complex components. Functionally, histone deacetylase that catalyzes the deacetylation of lysine residues on the N-terminal part of the core histones (H2A, H2B, H3 and H4). Histone deacetylation gives a tag for epigenetic repression and plays an important role in transcriptional regulation, cell cycle progression and developmental events. Histone deacetylases act via the formation of large multiprotein complexes. Also deacetylates non-histone proteins. In addition to protein deacetylase activity, also acts as a protein-lysine deacylase by recognizing other acyl groups: catalyzes removal of (2E)-butenoyl (crotonyl), lactoyl (lactyl) and 2-hydroxyisobutanoyl (2-hydroxyisobutyryl) acyl groups from lysine residues, leading to protein decrotonylation, delactylation and de-2-hydroxyisobutyrylation, respectively. This chain is Histone deacetylase 2 (HDAC2), found in Gallus gallus (Chicken).